The chain runs to 224 residues: Endonuclease NucS (224 aa).

This sequence belongs to the NucS endonuclease family.

It localises to the cytoplasm. Its function is as follows. Cleaves both 3' and 5' ssDNA extremities of branched DNA structures. The sequence is that of Endonuclease NucS from Rhodococcus erythropolis (strain PR4 / NBRC 100887).